Consider the following 100-residue polypeptide: Small ribosomal subunit protein uS14c (100 aa).

It belongs to the universal ribosomal protein uS14 family. As to quaternary structure, part of the 30S ribosomal subunit.

Its subcellular location is the plastid. The protein resides in the chloroplast. Binds 16S rRNA, required for the assembly of 30S particles. The protein is Small ribosomal subunit protein uS14c of Pelargonium hortorum (Common geranium).